Reading from the N-terminus, the 238-residue chain is Phosphoribosylaminoimidazole-succinocarboxamide synthase (238 aa).

This sequence belongs to the SAICAR synthetase family.

It carries out the reaction 5-amino-1-(5-phospho-D-ribosyl)imidazole-4-carboxylate + L-aspartate + ATP = (2S)-2-[5-amino-1-(5-phospho-beta-D-ribosyl)imidazole-4-carboxamido]succinate + ADP + phosphate + 2 H(+). It participates in purine metabolism; IMP biosynthesis via de novo pathway; 5-amino-1-(5-phospho-D-ribosyl)imidazole-4-carboxamide from 5-amino-1-(5-phospho-D-ribosyl)imidazole-4-carboxylate: step 1/2. The protein is Phosphoribosylaminoimidazole-succinocarboxamide synthase of Alcanivorax borkumensis (strain ATCC 700651 / DSM 11573 / NCIMB 13689 / SK2).